Here is a 291-residue protein sequence, read N- to C-terminus: MANSASLLYDQLKVAEPFFLLAGPNVIESEEHVLRMAKSIKDISTKLGLPLVFKSSFDKANRTSSKSFRGPGMAEGLKILEKVKVAFDLPIVTDVHESSQCEAVGKVADIIQIPAFLCRQTDLLVAAAQSGKIINIKKGQFCGHSVMRNSAEKVRLAGNPNVMVCERGTMFGYNDLIVDPRNLEWMREADCPVVADITHSLQQPAGKKLDGGGVASGGLRELIPCIARTAVAVGVDGIFMEVHDDPLNAPVDGPTQWPLRHLEELLEELIAIASVTKGKQQFQIDLTPYRD.

A2 carries the post-translational modification N-acetylalanine.

The protein belongs to the KdsA family. As to expression, expressed in roots, apical meristem, emerging leaves, hydathodes of young leaves, styles of mature flowers and funicules of mature siliques.

It is found in the cytoplasm. The enzyme catalyses D-arabinose 5-phosphate + phosphoenolpyruvate + H2O = 3-deoxy-alpha-D-manno-2-octulosonate-8-phosphate + phosphate. Functionally, catalyzes the stereospecific condensation of D-arabinose 5-phosphate and phosphoenolpyruvate to form 3-deoxy-D-manno-octulosonate 8-phosphate (KDO-8-phosphate) and inorganic phosphate. Involved in the biosynthesis of 3-deoxy-D-manno-octulosonate (KDO) which is an indispensable component of rhamnogalacturonan II (RG-II), a structurally complex pectic polysaccharide of the primary cell wall. RG-II is essential for the cell wall integrity of rapidly growing tissues and pollen tube growth and elongation. In Arabidopsis thaliana (Mouse-ear cress), this protein is 2-dehydro-3-deoxyphosphooctonate aldolase 2 (KDSA2).